We begin with the raw amino-acid sequence, 252 residues long: tRNA (guanine-N(1)-)-methyltransferase (252 aa).

S-adenosyl-L-methionine contacts are provided by residues Gly-113 and 133–138; that span reads IGDYVL. Over residues 229 to 238 the composition is skewed to low complexity; sequence VARPAANAPA. Residues 229 to 252 are disordered; that stretch reads VARPAANAPAKGESQKTPKNKTDG. Residues 241-252 show a composition bias toward basic and acidic residues; it reads ESQKTPKNKTDG.

It belongs to the RNA methyltransferase TrmD family. In terms of assembly, homodimer.

The protein resides in the cytoplasm. The catalysed reaction is guanosine(37) in tRNA + S-adenosyl-L-methionine = N(1)-methylguanosine(37) in tRNA + S-adenosyl-L-homocysteine + H(+). Functionally, specifically methylates guanosine-37 in various tRNAs. In Rhodopseudomonas palustris (strain HaA2), this protein is tRNA (guanine-N(1)-)-methyltransferase.